The following is a 588-amino-acid chain: MRTHFCGLVDETLIGQTVTLAGWTDVARNLGGVCFIDLRDHEGIVQVTVEPVAGDDASAELFKVAASLGYEDVLQVEGVVRARHAVNDKLRTGKVEVIATRISILNKAAPLPFHAHENPGEETRLKYRYLDLRRPEMQRMQRTRIKLVQALRRHLDARDFQDIETPILTKATPEGARDFLVPARMHPGEFYALPQSPQLFKQILMVAGFDRYYQIARCFRDEALRADRQLEFTQLDMEFAFVRERDVQDFVEDMMRAIFKEVVDVDLAAQFPRMTWAEAMRRYGSDKPDLRIALELVDVAELVKSSEFPVFTAAANDADGRVAALRIPGGATLSRKQIDDYAAHAAKYGAKGLAYIKLSETGEVNSPIAKFFGEEAFAALLKHVGAGNGDIVFFGAGGYTKVSDFMGALRLKAGKEFDLVAEGWAPLWVTDFPMFEWDDEAQRYVALHHPFTAPAVDDIADLRANARTAVSRGYDMVLNGNEIGGGSIRIHRPDMQSAVFELLGIGAEEARAKFGFLLDALNYGAPPHGGIAFGIDRIAALMAGTESIRDVIPFPKTTGAQDLMTDAPSPIAADQLAEVHVQIRAKQV.

L-aspartate is bound at residue Glu-174. Positions 198–201 are aspartate; that stretch reads QLFK. An L-aspartate-binding site is contributed by Arg-220. ATP-binding positions include 220–222 and Gln-229; that span reads RDE. Residue His-448 coordinates L-aspartate. Glu-482 contacts ATP. An L-aspartate-binding site is contributed by Arg-489. Residue 534 to 537 participates in ATP binding; sequence GIDR.

The protein belongs to the class-II aminoacyl-tRNA synthetase family. Type 1 subfamily. As to quaternary structure, homodimer.

The protein resides in the cytoplasm. It carries out the reaction tRNA(Asp) + L-aspartate + ATP = L-aspartyl-tRNA(Asp) + AMP + diphosphate. In terms of biological role, catalyzes the attachment of L-aspartate to tRNA(Asp) in a two-step reaction: L-aspartate is first activated by ATP to form Asp-AMP and then transferred to the acceptor end of tRNA(Asp). The polypeptide is Aspartate--tRNA ligase (Xanthomonas oryzae pv. oryzae (strain PXO99A)).